Reading from the N-terminus, the 567-residue chain is Ribulokinase (567 aa).

This sequence belongs to the ribulokinase family.

The enzyme catalyses D-ribulose + ATP = D-ribulose 5-phosphate + ADP + H(+). It carries out the reaction L-ribulose + ATP = L-ribulose 5-phosphate + ADP + H(+). Its pathway is carbohydrate degradation; L-arabinose degradation via L-ribulose; D-xylulose 5-phosphate from L-arabinose (bacterial route): step 2/3. The sequence is that of Ribulokinase from Vibrio parahaemolyticus serotype O3:K6 (strain RIMD 2210633).